The following is a 451-amino-acid chain: uncharacterized protein (451 aa).

Residues 1-59 (MLKKNDIVEVEISDLSHDGAGIAKVDGLVFFVDNALPTEKIRMRVLKVKKNIAFGKVES) form the TRAM domain. Positions 283, 312, 333, and 381 each coordinate S-adenosyl-L-methionine. C408 functions as the Nucleophile in the catalytic mechanism.

It belongs to the class I-like SAM-binding methyltransferase superfamily. RNA M5U methyltransferase family.

This is an uncharacterized protein from Streptococcus mutans serotype c (strain ATCC 700610 / UA159).